Reading from the N-terminus, the 343-residue chain is Programmed cell death protein 2 (343 aa).

Zn(2+) is bound by residues C134, C137, C145, C148, C154, H158, H167, and C171. The segment at 134 to 171 adopts an MYND-type; atypical zinc-finger fold; sequence CRVCGCLAPMTCSRCKQAHYCSKEHQTLDWQLGHKQAC.

Post-translationally, ubiquitinated by PRKN, promoting proteasomal degradation.

The protein resides in the nucleus. Its function is as follows. May be a DNA-binding protein with a regulatory function. May play an important role in cell death and/or in regulation of cell proliferation. In Rattus norvegicus (Rat), this protein is Programmed cell death protein 2 (Pdcd2).